We begin with the raw amino-acid sequence, 101 residues long: Small ribosomal subunit protein uS14 (101 aa).

The span at 1–11 (MAKKSAIETNE) shows a compositional bias: basic and acidic residues. The disordered stretch occupies residues 1–20 (MAKKSAIETNERRRKLATGH).

It belongs to the universal ribosomal protein uS14 family. In terms of assembly, part of the 30S ribosomal subunit. Contacts proteins S3 and S10.

Its function is as follows. Binds 16S rRNA, required for the assembly of 30S particles and may also be responsible for determining the conformation of the 16S rRNA at the A site. The polypeptide is Small ribosomal subunit protein uS14 (Xanthobacter autotrophicus (strain ATCC BAA-1158 / Py2)).